A 102-amino-acid polypeptide reads, in one-letter code: Thioredoxin (102 aa).

One can recognise a Thioredoxin domain in the interval 2-102 (VTEIRSLKQL…KTKIIDLFNN (101 aa)). A disulfide bond links cysteine 30 and cysteine 33.

The protein belongs to the thioredoxin family.

In terms of biological role, participates in various redox reactions through the reversible oxidation of its active center dithiol to a disulfide and catalyzes dithiol-disulfide exchange reactions. The protein is Thioredoxin (trxA) of Mycoplasma genitalium (strain ATCC 33530 / DSM 19775 / NCTC 10195 / G37) (Mycoplasmoides genitalium).